The following is a 144-amino-acid chain: Maximins 6/H10 (144 aa).

The N-terminal stretch at 1–18 (MNFKYIVAVSFLIASAYA) is a signal peptide. A propeptide spanning residues 19 to 43 (RSVKNDEQSLSQRDVLDEESLREIR) is cleaved from the precursor. The residue at position 70 (N70) is an Asparagine amide. Residues 74–123 (TAEDHEVMKRLEAVMRDLDSLDHPEEASERETRGFNQEEIANRFTKKEKR) constitute a propeptide that is removed on maturation. Leucine amide is present on L143.

Belongs to the bombinin family. Expressed by the skin glands.

The protein localises to the secreted. In terms of biological role, maximin-6 shows antimicrobial activity against bacteria and against the fungus C.albicans. It has little hemolytic activity. Maximin-H10 shows antimicrobial activity against bacteria and against the fungus C.albicans. Shows strong hemolytic activity. The sequence is that of Maximins 6/H10 from Bombina maxima (Giant fire-bellied toad).